A 131-amino-acid chain; its full sequence is uncharacterized protein (131 aa).

The disordered stretch occupies residues 99–131 (NAIQEEEIDMEQQEEKEEKPREKGKKKSVEEEF). Positions 102-113 (QEEEIDMEQQEE) are enriched in acidic residues. Over residues 114 to 131 (KEEKPREKGKKKSVEEEF) the composition is skewed to basic and acidic residues.

This is an uncharacterized protein from Sulfolobus islandicus rod-shaped virus 1 (SIRV-1).